A 351-amino-acid chain; its full sequence is tRNA N6-adenosine threonylcarbamoyltransferase (351 aa).

Fe cation is bound by residues histidine 111 and histidine 115. Residues 134 to 138 (LVSGG), aspartate 167, glycine 180, and asparagine 276 each bind substrate. Aspartate 304 contacts Fe cation.

The protein belongs to the KAE1 / TsaD family. Requires Fe(2+) as cofactor.

The protein localises to the cytoplasm. The catalysed reaction is L-threonylcarbamoyladenylate + adenosine(37) in tRNA = N(6)-L-threonylcarbamoyladenosine(37) in tRNA + AMP + H(+). Its function is as follows. Required for the formation of a threonylcarbamoyl group on adenosine at position 37 (t(6)A37) in tRNAs that read codons beginning with adenine. Is involved in the transfer of the threonylcarbamoyl moiety of threonylcarbamoyl-AMP (TC-AMP) to the N6 group of A37, together with TsaE and TsaB. TsaD likely plays a direct catalytic role in this reaction. The sequence is that of tRNA N6-adenosine threonylcarbamoyltransferase from Marinobacter nauticus (strain ATCC 700491 / DSM 11845 / VT8) (Marinobacter aquaeolei).